Reading from the N-terminus, the 73-residue chain is Putative antitoxin VapB18 (73 aa).

Belongs to the UPF0330 family.

Possibly the antitoxin component of a type II toxin-antitoxin (TA) system. Its cognate toxin is VapC18 (Potential). In Archaeoglobus fulgidus (strain ATCC 49558 / DSM 4304 / JCM 9628 / NBRC 100126 / VC-16), this protein is Putative antitoxin VapB18 (vapB18).